The primary structure comprises 283 residues: SNAP25 homologous protein SNAP32 (283 aa).

Disordered stretches follow at residues 1 to 64 (MSGR…AAAR) and 192 to 212 (LGLSDHPPQSNARQFHSEPTS). The span at 198–212 (PPQSNARQFHSEPTS) shows a compositional bias: polar residues. In terms of domain architecture, t-SNARE coiled-coil homology spans 218–280 (EMEKAKQDDG…KGANTRARRL (63 aa)).

This sequence belongs to the SNAP-25 family. Interacts with SYP121. In terms of tissue distribution, expressed in roots, culms and leaves.

It is found in the membrane. Its function is as follows. t-SNARE involved in diverse vesicle trafficking and membrane fusion processes. May be involved in resistance to the rice blast fungus Magnaporthe oryzae. May contribute to host resistance to rice blast through interaction with SYP121. The sequence is that of SNAP25 homologous protein SNAP32 from Oryza sativa subsp. japonica (Rice).